Consider the following 139-residue polypeptide: Large ribosomal subunit protein uL16 (139 aa).

This sequence belongs to the universal ribosomal protein uL16 family. Part of the 50S ribosomal subunit.

In terms of biological role, binds 23S rRNA and is also seen to make contacts with the A and possibly P site tRNAs. This is Large ribosomal subunit protein uL16 from Treponema pallidum (strain Nichols).